The sequence spans 198 residues: Probable molybdenum cofactor guanylyltransferase (198 aa).

GTP-binding positions include 9-11 (LAG), Lys-22, Asp-66, and Asp-95. Position 95 (Asp-95) interacts with Mg(2+).

The protein belongs to the MobA family. The cofactor is Mg(2+).

Its subcellular location is the cytoplasm. The enzyme catalyses Mo-molybdopterin + GTP + H(+) = Mo-molybdopterin guanine dinucleotide + diphosphate. Its function is as follows. Transfers a GMP moiety from GTP to Mo-molybdopterin (Mo-MPT) cofactor (Moco or molybdenum cofactor) to form Mo-molybdopterin guanine dinucleotide (Mo-MGD) cofactor. The polypeptide is Probable molybdenum cofactor guanylyltransferase (Clostridium perfringens (strain 13 / Type A)).